The sequence spans 340 residues: Ribonucleoside-diphosphate reductase subunit beta (340 aa).

Positions 88 and 122 each coordinate Fe cation. Tyrosine 126 is a catalytic residue. Histidine 216 lines the Fe cation pocket.

It belongs to the ribonucleoside diphosphate reductase small chain family. As to quaternary structure, tetramer of two alpha and two beta subunits. The cofactor is Fe cation.

It catalyses the reaction a 2'-deoxyribonucleoside 5'-diphosphate + [thioredoxin]-disulfide + H2O = a ribonucleoside 5'-diphosphate + [thioredoxin]-dithiol. In terms of biological role, provides the precursors necessary for DNA synthesis. Catalyzes the biosynthesis of deoxyribonucleotides from the corresponding ribonucleotides. This is Ribonucleoside-diphosphate reductase subunit beta (nrdF) from Mycoplasma genitalium (strain ATCC 33530 / DSM 19775 / NCTC 10195 / G37) (Mycoplasmoides genitalium).